The primary structure comprises 507 residues: Tryptophan aminotransferase-related protein 2 (507 aa).

The tract at residues 91–135 is disordered; the sequence is PPPHHHHHDAGLATRSSDAAVHRRARTASSMAPSTGKPAVTTDSV. Pyridoxal 5'-phosphate-binding positions include tyrosine 169, 211-212, asparagine 282, 304-307, 327-330, and arginine 338; these read ST, DLAY, and TVSK. Lysine 330 is subject to N6-(pyridoxal phosphate)lysine.

It belongs to the alliinase family. It depends on pyridoxal 5'-phosphate as a cofactor. Widely expressed.

It catalyses the reaction L-tryptophan + 2-oxoglutarate = indole-3-pyruvate + L-glutamate. It functions in the pathway plant hormone metabolism; auxin biosynthesis. In terms of biological role, probable tryptophan aminotransferase involved in auxin (IAA) biosynthesis. Required for auxin production to initiate multiple change in growth in response to environmental and developmental cues. Functions upstream of YUCCA1 in auxin biosynthesis. Required for polar auxin transport. This Oryza sativa subsp. japonica (Rice) protein is Tryptophan aminotransferase-related protein 2.